The primary structure comprises 71 residues: SPI-2 type 3 secretion system needle filament protein (71 aa).

It belongs to the SctF family. In terms of assembly, the core secretion machinery of the T3SS is composed of approximately 20 different proteins, including cytoplasmic components, a base, an export apparatus and a needle. This subunit polymerizes and forms the helical needle filament.

The protein localises to the secreted. It is found in the cell surface. Functionally, component of the type III secretion system (T3SS), also called injectisome, which is used to inject bacterial effector proteins into eukaryotic host cells. SsaG/SctF2 forms the external needle filament that protrudes from the bacterial surface. During infection, can induce innate immune responses. The needle proteins interact with host TLR2 or TLR4, and induce signaling by NF-kappa-B and/or AP-1. This activation is MyD88 dependent and results in increased expression of cytokines, including TNF-alpha, IL-6 and IL-8. This Salmonella typhimurium (strain LT2 / SGSC1412 / ATCC 700720) protein is SPI-2 type 3 secretion system needle filament protein.